A 528-amino-acid polypeptide reads, in one-letter code: Probable protein phosphatase 2C 51 (528 aa).

The chain crosses the membrane as a helical span at residues 8–28 (SLLNLGLLIIFFVFFFLVINC). Residues 71–445 (RCHTAAIQGR…DNMAAVVVPL (375 aa)) enclose the PPM-type phosphatase domain. Positions 117, 118, 385, and 436 each coordinate Mn(2+).

This sequence belongs to the PP2C family. Mg(2+) serves as cofactor. Requires Mn(2+) as cofactor.

It localises to the membrane. It catalyses the reaction O-phospho-L-seryl-[protein] + H2O = L-seryl-[protein] + phosphate. It carries out the reaction O-phospho-L-threonyl-[protein] + H2O = L-threonyl-[protein] + phosphate. The protein is Probable protein phosphatase 2C 51 of Arabidopsis thaliana (Mouse-ear cress).